The chain runs to 190 residues: Probable E3 ubiquitin-protein ligase RHB1A (190 aa).

The RING-type; atypical zinc-finger motif lies at 139-180; it reads CPICFEDYDVENPRLTTKCEHEFHLSCLLEWIERSDRCPICD.

The catalysed reaction is S-ubiquitinyl-[E2 ubiquitin-conjugating enzyme]-L-cysteine + [acceptor protein]-L-lysine = [E2 ubiquitin-conjugating enzyme]-L-cysteine + N(6)-ubiquitinyl-[acceptor protein]-L-lysine.. It participates in protein modification; protein ubiquitination. Its function is as follows. Probable E3 ubiquitin-protein ligase that may possess E3 ubiquitin ligase activity in vitro. In Arabidopsis thaliana (Mouse-ear cress), this protein is Probable E3 ubiquitin-protein ligase RHB1A.